Reading from the N-terminus, the 557-residue chain is Ribonuclease J 2 (557 aa).

4 residues coordinate Zn(2+): histidine 76, histidine 78, histidine 144, and glutamate 166. A substrate-binding site is contributed by 366-370 (HASSH).

Belongs to the metallo-beta-lactamase superfamily. RNA-metabolizing metallo-beta-lactamase-like family. Bacterial RNase J subfamily. As to quaternary structure, homodimer, may be a subunit of the RNA degradosome. Zn(2+) is required as a cofactor.

It localises to the cytoplasm. An RNase that has 5'-3' exonuclease and possibly endoonuclease activity. Involved in maturation of rRNA and in some organisms also mRNA maturation and/or decay. This Staphylococcus aureus (strain MRSA252) protein is Ribonuclease J 2.